Here is an 827-residue protein sequence, read N- to C-terminus: Disintegrin and metalloproteinase domain-containing protein 17 (827 aa).

Residues 1-17 (MRQRLLFLTTLVPFVLA) form the signal peptide. Positions 18-214 (PRPPEEPGSG…SEEFVRRVKR (197 aa)) are excised as a propeptide. Asn157 carries an N-linked (GlcNAc...) asparagine glycan. The Cysteine switch signature appears at 182-189 (KVCGYLNA). Cys184 serves as a coordination point for Zn(2+). At 215–671 (RAEPNPLKNT…NTFGKFLADN (457 aa)) the chain is on the extracellular side. The region spanning 223-474 (NTCKLLVVAD…KAQECFQERS (252 aa)) is the Peptidase M12B domain. Intrachain disulfides connect Cys225–Cys333, Cys365–Cys469, and Cys423–Cys453. N-linked (GlcNAc...) asparagine glycosylation occurs at Asn264. His405 lines the Zn(2+) pocket. The active site involves Glu406. Positions 409 and 415 each coordinate Zn(2+). Asn452, Asn498, Asn539, and Asn551 each carry an N-linked (GlcNAc...) asparagine glycan. The Disintegrin domain occupies 475–563 (NKVCGNSRVD…ECPPPGDAED (89 aa)). 4 disulfide bridges follow: Cys534–Cys555, Cys573–Cys582, Cys578–Cys591, and Cys593–Cys600. The segment at 603-671 (CCRNLSGPCV…NTFGKFLADN (69 aa)) is crambin-like. Asn606 is a glycosylation site (N-linked (GlcNAc...) asparagine). A helical transmembrane segment spans residues 672–692 (IVGSVLVFSLIFWIPFSILVH). Over 693 to 827 (CVDKKLDKQY…SRVDSKETEC (135 aa)) the chain is Cytoplasmic. The SH3-binding motif lies at 731 to 738 (PAPQTPGR). Position 735 is a phosphothreonine; by MAPK14 (Thr735). Thr764 is modified (phosphothreonine). The tract at residues 766 to 827 (QEDPSTDSHV…SRVDSKETEC (62 aa)) is disordered. Residue Ser770 is modified to Phosphoserine. 3 stretches are compositionally biased toward basic and acidic residues: residues 771–784 (TDSH…EKDP), 794–810 (SFED…EKAA), and 818–827 (SRVDSKETEC). Phosphoserine is present on residues Ser794 and Ser822.

In terms of assembly, interacts with MAD2L1, MAPK14 and MUC1. Interacts with iRhom1/RHBDF1 and iRhom2/RHBDF2. Interacts with FRMD8 via its interaction with iRhom1/RHBDF1 and iRhom2/RHBDF2. Interacts with TSPAN8. Zn(2+) is required as a cofactor. The precursor is cleaved by a furin endopeptidase. Post-translationally, phosphorylated. Stimulation by growth factor or phorbol 12-myristate 13-acetate induces phosphorylation of Ser-822 but decreases phosphorylation of Ser-794. Phosphorylation at Thr-735 by MAPK14 is required for ADAM17-mediated ectodomain shedding.

It is found in the membrane. It catalyses the reaction Narrow endopeptidase specificity. Cleaves Pro-Leu-Ala-Gln-Ala-|-Val-Arg-Ser-Ser-Ser in the membrane-bound, 26-kDa form of tumor necrosis factor alpha (TNFalpha). Similarly cleaves other membrane-anchored, cell-surface proteins to 'shed' the extracellular domains.. In terms of biological role, transmembrane metalloprotease which mediates the ectodomain shedding of a myriad of transmembrane proteins including adhesion proteins, growth factor precursors and cytokines important for inflammation and immunity. Cleaves the membrane-bound precursor of TNF-alpha to its mature soluble form. Responsible for the proteolytical release of soluble JAM3 from endothelial cells surface. Responsible for the proteolytic release of several other cell-surface proteins, including p75 TNF-receptor, interleukin 1 receptor type II, p55 TNF-receptor, transforming growth factor-alpha, L-selectin, growth hormone receptor, MUC1 and the amyloid precursor protein. Acts as an activator of Notch pathway by mediating cleavage of Notch, generating the membrane-associated intermediate fragment called Notch extracellular truncation (NEXT). Plays a role in the proteolytic processing of ACE2. Plays a role in hemostasis through shedding of GP1BA, the platelet glycoprotein Ib alpha chain. Mediates the proteolytic cleavage of LAG3, leading to release the secreted form of LAG3. Mediates the proteolytic cleavage of IL6R, leading to the release of secreted form of IL6R. Mediates the proteolytic cleavage and shedding of FCGR3A upon NK cell stimulation, a mechanism that allows for increased NK cell motility and detachment from opsonized target cells. Cleaves TREM2, resulting in shedding of the TREM2 ectodomain. The polypeptide is Disintegrin and metalloproteinase domain-containing protein 17 (Adam17) (Rattus norvegicus (Rat)).